We begin with the raw amino-acid sequence, 225 residues long: Cold-regulated 413 inner membrane protein 1, chloroplastic (225 aa).

A chloroplast-targeting transit peptide spans 1-76 (MASLCLSSSR…RKRGSSVVCY (76 aa)). A topological domain (stromal) is located at residue Ala-77. A helical membrane pass occupies residues 78 to 98 (APISANSLQWISTISCLALML). At 99 to 102 (ARGT) the chain is on the chloroplast intermembrane side. The chain crosses the membrane as a helical span at residues 103 to 123 (GIHKSVVVPLFALHAPSSIVA). At 124–128 (WIKGE) the chain is on the stromal side. A helical membrane pass occupies residues 129–149 (YGVWAAFLALIARLFFTFPGE). The Chloroplast intermembrane segment spans residues 150 to 151 (LE). Residues 152 to 172 (LPFIALLLVIVAPYQVMNIRG) traverse the membrane as a helical segment. Residues 173-175 (KQE) are Stromal-facing. The chain crosses the membrane as a helical span at residues 176-196 (GAIIAIAISGFLAFQHFSRAG). Topologically, residues 197-204 (SLEKAYEK) are chloroplast intermembrane. A helical transmembrane segment spans residues 205–225 (GSVLATVAIIGVTVVSLLLLL).

Belongs to the Cold-regulated 413 protein family.

The protein resides in the plastid. It localises to the chloroplast inner membrane. In Arabidopsis thaliana (Mouse-ear cress), this protein is Cold-regulated 413 inner membrane protein 1, chloroplastic (COR413IM1).